The following is a 194-amino-acid chain: UPF0301 protein FTH_1193 (194 aa).

This sequence belongs to the UPF0301 (AlgH) family.

The protein is UPF0301 protein FTH_1193 of Francisella tularensis subsp. holarctica (strain OSU18).